Reading from the N-terminus, the 268-residue chain is Testis-specific serine/threonine-protein kinase 3 (268 aa).

The region spanning 10-265 (YQLGKTIGEG…IEEVSWHPWL (256 aa)) is the Protein kinase domain. Residues 16–24 (IGEGTYSKV) and Lys39 each bind ATP. The Proton acceptor role is filled by Asp134. Position 166 is a phosphoserine; by autocatalysis (Ser166). Thr168 carries the post-translational modification Phosphothreonine; by PDPK1.

It belongs to the protein kinase superfamily. CAMK Ser/Thr protein kinase family. Mg(2+) serves as cofactor. It depends on Mn(2+) as a cofactor. Autophosphorylated at Ser-166. Phosphorylation at Thr-168 by PDPK1 activates the serine/threonine protein kinase activity. Developmentally expressed in testicular germ cells. In adult testis, expression was detected in round and condensing spermatids, but not in meiotic pachytene spermatocytes. Not expressed in brain, ovary, kidney, liver or early embryonic cells.

It is found in the cell projection. It localises to the cilium. Its subcellular location is the flagellum. It carries out the reaction L-seryl-[protein] + ATP = O-phospho-L-seryl-[protein] + ADP + H(+). The enzyme catalyses L-threonyl-[protein] + ATP = O-phospho-L-threonyl-[protein] + ADP + H(+). With respect to regulation, activated by phosphorylation on Thr-168 by PDPK1. Serine/threonine protein kinase required for spermatid development and male fertility. The polypeptide is Testis-specific serine/threonine-protein kinase 3 (Mus musculus (Mouse)).